A 248-amino-acid chain; its full sequence is tRNA (guanine-N(1)-)-methyltransferase (248 aa).

S-adenosyl-L-methionine-binding positions include glycine 117 and 137-142 (LGDFVL).

This sequence belongs to the RNA methyltransferase TrmD family. Homodimer.

The protein resides in the cytoplasm. It catalyses the reaction guanosine(37) in tRNA + S-adenosyl-L-methionine = N(1)-methylguanosine(37) in tRNA + S-adenosyl-L-homocysteine + H(+). In terms of biological role, specifically methylates guanosine-37 in various tRNAs. This is tRNA (guanine-N(1)-)-methyltransferase from Herminiimonas arsenicoxydans.